The primary structure comprises 697 residues: CENP-A multicopy suppressor protein 2 (697 aa).

A GATA-type; atypical zinc finger spans residues 351-378 (CQNCGTIKTANWRNATYMNITLMLCNAC). Residues 443-484 (PLNRLTSLDSTHSAPDPNHISKPSVVNQQKSRGGPRTAKLKN) form a disordered region. The span at 445 to 455 (NRLTSLDSTHS) shows a compositional bias: polar residues.

In terms of assembly, interacts with CENP-A.

It localises to the nucleus. Its subcellular location is the chromosome. The protein resides in the centromere. In terms of biological role, required for proper chromosome segregation via regulation of CENP-A localization to the centromere. In Schizosaccharomyces pombe (strain 972 / ATCC 24843) (Fission yeast), this protein is CENP-A multicopy suppressor protein 2 (ams2).